The chain runs to 324 residues: Tetrachlorobenzoquinone reductase (324 aa).

In terms of domain architecture, FAD-binding FR-type spans 5-107 (VSTIDMTVTQ…VPPANNFALV (103 aa)). Residues 238-324 (FTVVLARRSG…SKSPRLVLDI (87 aa)) enclose the 2Fe-2S ferredoxin-type domain. [2Fe-2S] cluster-binding residues include Cys273, Cys278, Cys281, and Cys311.

It belongs to the PDR/VanB family. Homotrimer. It depends on FMN as a cofactor. [2Fe-2S] cluster is required as a cofactor.

It carries out the reaction 2,3,5,6-tetrachlorohydroquinone + NAD(+) + H(+) = 2,3,5,6-tetrachloro-1,4-benzoquinone + NADH. Its pathway is xenobiotic degradation; pentachlorophenol degradation. Its activity is regulated as follows. In vitro, activated by tetrachlorohydroquinone (TCHQ) at low concentrations and inhibited at high concentrations (above 200 uM). However, PcpD would only be stimulated by tetrachlorohydroquinone (TCHQ) under in vivo conditions due to the toxicity of tetrachlorohydroquinone (TCHQ). Competitively inhibited by pentachlorophenol (PCP) in a concentration-dependent manner. PcpD is regulated by tetrachlorohydroquinone (TCHQ) and pentachlorophenol (PCP) using a mechanism, which maintains tetrachlorobenzoquinone at a level that would neither significantly decrease the biodegradation of pentachlorophenol (PCP) nor cause cytotoxicity in cells. Involved in the degradation of the xenobiocide pentachlorophenol (PCP). Catalyzes the reduction of tetrachlorobenzoquinone (TCBQ) to yield tetrachlorohydroquinone (TCHQ). Also able to reduce 2,6-dichloroindophenol (DCIP). The protein is Tetrachlorobenzoquinone reductase of Sphingobium chlorophenolicum.